A 1372-amino-acid polypeptide reads, in one-letter code: DNA-directed RNA polymerase subunit beta' (1372 aa).

4 residues coordinate Zn(2+): cysteine 69, cysteine 71, cysteine 84, and cysteine 87. Mg(2+) is bound by residues aspartate 460, aspartate 462, and aspartate 464. Residues cysteine 808, cysteine 882, cysteine 889, and cysteine 892 each contribute to the Zn(2+) site.

The protein belongs to the RNA polymerase beta' chain family. As to quaternary structure, the RNAP catalytic core consists of 2 alpha, 1 beta, 1 beta' and 1 omega subunit. When a sigma factor is associated with the core the holoenzyme is formed, which can initiate transcription. The cofactor is Mg(2+). Requires Zn(2+) as cofactor.

It carries out the reaction RNA(n) + a ribonucleoside 5'-triphosphate = RNA(n+1) + diphosphate. Its function is as follows. DNA-dependent RNA polymerase catalyzes the transcription of DNA into RNA using the four ribonucleoside triphosphates as substrates. The polypeptide is DNA-directed RNA polymerase subunit beta' (Rickettsia bellii (strain OSU 85-389)).